Consider the following 247-residue polypeptide: Peroxisomal membrane protein 11A (247 aa).

At 1 to 83 (MDAFIRFTNQ…SVRATDLVPR (83 aa)) the chain is on the cytoplasmic side. The chain crosses the membrane as a helical span at residues 84–105 (ICLTLASLNRVIYFICDTVLFV). Residues 106–219 (RSTGLASGVN…DQLGIYKSNP (114 aa)) lie on the Lumenal side of the membrane. The chain crosses the membrane as a helical span at residues 220 to 239 (GIIGLGGLVSSVAGIITVAY). The interval 220 to 239 (GIIGLGGLVSSVAGIITVAY) is required for homodimerization, interaction with PEX11G, and peroxisomal localization. Over 240–247 (PQMKLKTQ) the chain is Cytoplasmic.

The protein belongs to the peroxin-11 family. Homodimer. Heterodimer with PEX11G. Probably interacts with COPB2 and COPA. Interacts with PEX19. Interacts with FIS1.

It is found in the peroxisome membrane. May be involved in peroxisomal proliferation and may regulate peroxisomes division. May mediate binding of coatomer proteins to the peroxisomal membrane. Promotes membrane protrusion and elongation on the peroxisomal surface. This Bos taurus (Bovine) protein is Peroxisomal membrane protein 11A (PEX11A).